We begin with the raw amino-acid sequence, 250 residues long: Cyclin-Q (250 aa).

Methionine 1 is modified (N-acetylmethionine). The span at 1 to 10 shows a compositional bias: basic and acidic residues; sequence MEAVRPDSCE. The interval 1–22 is disordered; sequence MEAVRPDSCERGTAAARAEERP.

The protein belongs to the cyclin family. Cyclin-like FAM58 subfamily. Associates with CDK10 to promote its kinase activity.

Its function is as follows. Activating cyclin for the cyclin-associated kinase CDK10. This chain is Cyclin-Q (Ccnq), found in Rattus norvegicus (Rat).